The primary structure comprises 368 residues: Protein RecA (368 aa).

72–79 (GNESSGKT) provides a ligand contact to ATP.

It belongs to the RecA family.

It localises to the cytoplasm. In terms of biological role, can catalyze the hydrolysis of ATP in the presence of single-stranded DNA, the ATP-dependent uptake of single-stranded DNA by duplex DNA, and the ATP-dependent hybridization of homologous single-stranded DNAs. It interacts with LexA causing its activation and leading to its autocatalytic cleavage. The chain is Protein RecA from Petrotoga mobilis (strain DSM 10674 / SJ95).